The primary structure comprises 294 residues: 4-hydroxy-tetrahydrodipicolinate synthase (294 aa).

Threonine 47 lines the pyruvate pocket. Catalysis depends on tyrosine 135, which acts as the Proton donor/acceptor. Residue lysine 163 is the Schiff-base intermediate with substrate of the active site. Residue valine 205 coordinates pyruvate.

The protein belongs to the DapA family. In terms of assembly, homotetramer; dimer of dimers.

It localises to the cytoplasm. The enzyme catalyses L-aspartate 4-semialdehyde + pyruvate = (2S,4S)-4-hydroxy-2,3,4,5-tetrahydrodipicolinate + H2O + H(+). It functions in the pathway amino-acid biosynthesis; L-lysine biosynthesis via DAP pathway; (S)-tetrahydrodipicolinate from L-aspartate: step 3/4. Functionally, catalyzes the condensation of (S)-aspartate-beta-semialdehyde [(S)-ASA] and pyruvate to 4-hydroxy-tetrahydrodipicolinate (HTPA). In Rickettsia bellii (strain OSU 85-389), this protein is 4-hydroxy-tetrahydrodipicolinate synthase.